Consider the following 255-residue polypeptide: Small ribosomal subunit protein uS2 (255 aa).

It belongs to the universal ribosomal protein uS2 family.

The polypeptide is Small ribosomal subunit protein uS2 (Streptococcus thermophilus (strain CNRZ 1066)).